The following is a 339-amino-acid chain: Heat stress transcription factor C-1a (339 aa).

Positions 154 to 217 (EEEDAAEDVL…LAKLADDPNA (64 aa)) form a coiled coil. The tract at residues 176 to 212 (LRHEQTAIGEELARMSQRLQATERRPDQLMSFLAKLA) is hydrophobic repeat HR-A/B. Residues 227 to 248 (AERKRRRQHLPSHEPTVCPLPP) are disordered. The Nuclear localization signal signature appears at 229-233 (RKRRR).

It belongs to the HSF family. Class C subfamily. As to quaternary structure, homotrimer. Exhibits temperature-dependent phosphorylation.

It is found in the nucleus. Transcriptional regulator that specifically binds DNA of heat shock promoter elements (HSE). The chain is Heat stress transcription factor C-1a (HSFC1A) from Oryza sativa subsp. japonica (Rice).